The sequence spans 275 residues: Diaminopimelate epimerase (275 aa).

Substrate-binding residues include N12, Q45, and N65. Catalysis depends on C74, which acts as the Proton donor. Substrate-binding positions include 75–76, N158, N191, and 209–210; these read GN and ER. C218 acts as the Proton acceptor in catalysis. 219–220 is a binding site for substrate; the sequence is GT.

This sequence belongs to the diaminopimelate epimerase family. As to quaternary structure, homodimer.

The protein localises to the cytoplasm. The catalysed reaction is (2S,6S)-2,6-diaminopimelate = meso-2,6-diaminopimelate. Its pathway is amino-acid biosynthesis; L-lysine biosynthesis via DAP pathway; DL-2,6-diaminopimelate from LL-2,6-diaminopimelate: step 1/1. Its function is as follows. Catalyzes the stereoinversion of LL-2,6-diaminopimelate (L,L-DAP) to meso-diaminopimelate (meso-DAP), a precursor of L-lysine and an essential component of the bacterial peptidoglycan. The polypeptide is Diaminopimelate epimerase (Shewanella sp. (strain MR-4)).